Here is a 374-residue protein sequence, read N- to C-terminus: MSANDFKPETWTSSANEALRVSIVGENAVQFSPLFTYPIYGDSEKIYGYKDLIIHLAFDSVTFKPYVNVKYSAKLGDDNIVDVEKKLLSFLPKDDVIVRDEAKWVDCFAEERKTHNLSDVFEKVSEYSLNGEEFVVYKSSLVDDFARRMHRRVQIFSLLFIEAANYIDETDPSWQIYWLLNKKTKELIGFVTTYKYWHYLGAKSFDEDIDKKFRAKISQFLIFPPYQNKGHGSCLYEAIIQSWLEDKSITEITVEDPNEAFDDLRDRNDIQRLRKLGYDAVFQKHSDLSDEFLESSRKSLKLEERQFNRLVEMLLLLNNSPSFELKVKNRLYIKNYDALDQTDPEKAREALQNSFILVKDDYRRIIESINKSQG.

Interaction with histone H4 N-terminus regions lie at residues 42–44 (DSE) and 194–196 (YKY). The 169-residue stretch at 135–303 (VVYKSSLVDD…ESSRKSLKLE (169 aa)) folds into the N-acetyltransferase domain. The segment at 197-205 (WHYLGAKSF) is interaction with HAT2. Residues 220 to 222 (FLI) and 227 to 233 (QNKGHGS) contribute to the acetyl-CoA site. Glu-255 (proton donor/acceptor) is an active-site residue. 2 residues coordinate acetyl-CoA: Asn-258 and Arg-267. The residue at position 354 (Ser-354) is a Phosphoserine.

This sequence belongs to the HAT1 family. Component of the HAT-B complex composed of at least HAT1 and HAT2. In the cytoplasm, this complex binds to the histone H4 tail. In the nucleus, the HAT-B complex has an additional component, the histone H3/H4 chaperone HIF1.

The protein localises to the cytoplasm. It is found in the nucleus. The catalysed reaction is L-lysyl-[protein] + acetyl-CoA = N(6)-acetyl-L-lysyl-[protein] + CoA + H(+). In terms of biological role, catalytic component of the histone acetylase B (HAT-B) complex. Acetylates 'Lys-12' of free histone H4 in the cytoplasm. The complex is also found in the nucleus, however it is not certain that it modifies histone H4 when packaged in chromatin. Histone H4 'Lys-12' acetylation is required for telomeric silencing. Has intrinsic substrate specificity that modifies lysine in recognition sequence GXGKXG. Involved in DNA double-strand break repair. The sequence is that of Histone acetyltransferase type B catalytic subunit (HAT1) from Saccharomyces cerevisiae (strain ATCC 204508 / S288c) (Baker's yeast).